Here is a 232-residue protein sequence, read N- to C-terminus: Aquaporin Z 2 (232 aa).

2 consecutive transmembrane segments (helical) span residues 9–29 (FLGT…ASAF) and 32–52 (VGIG…TMAY). The NPA 1 signature appears at 63–65 (NPA). The next 3 helical transmembrane spans lie at 82–102 (VSYV…LYVI), 129–149 (LTAA…IILG), and 158–178 (GFAP…SIPV). The NPA 2 signature appears at 184–186 (NPA). Residues 200–220 (LSQLWLFWIAPLFGAAIAGIV) form a helical membrane-spanning segment.

The protein belongs to the MIP/aquaporin (TC 1.A.8) family. As to quaternary structure, homotetramer.

Its subcellular location is the cell inner membrane. It carries out the reaction H2O(in) = H2O(out). Channel that permits osmotically driven movement of water in both directions. It is involved in the osmoregulation and in the maintenance of cell turgor during volume expansion in rapidly growing cells. It mediates rapid entry or exit of water in response to abrupt changes in osmolarity. This chain is Aquaporin Z 2, found in Rhizobium meliloti (strain 1021) (Ensifer meliloti).